The following is a 161-amino-acid chain: DNA-directed RNA polymerase 19 kDa subunit (161 aa).

A compositionally biased stretch (acidic residues) spans 1–32 (MADTDDIIDYESDDLTEYEDDEEDGESLETSD). Residues 1–35 (MADTDDIIDYESDDLTEYEDDEEDGESLETSDIDP) form a disordered region.

This sequence belongs to the poxviridae DNA-directed RNA polymerase 19 kDa subunit family. In terms of assembly, the DNA-dependent RNA polymerase used for intermediate and late genes expression consists of eight subunits Rpo30/OPG66, Rpo7/OPG90, Rpo22/OPG103, Rpo147/OPG105, Rpo18/OPG119, Rpo19/OPG131, Rpo132/OPG151 and Rpo35/OPG156. The same holoenzyme, with the addition of the transcription-specificity factor OPG109, is used for early gene expression.

It is found in the virion. The enzyme catalyses RNA(n) + a ribonucleoside 5'-triphosphate = RNA(n+1) + diphosphate. Functionally, part of the DNA-dependent RNA polymerase which catalyzes the transcription of viral DNA into RNA using the four ribonucleoside triphosphates as substrates. Responsible for the transcription of early, intermediate and late genes. DNA-dependent RNA polymerase associates with the early transcription factor (ETF), itself composed of OPG118 and OPG133, thereby allowing the early genes transcription. Late transcription, and probably also intermediate transcription, require newly synthesized RNA polymerase. The chain is DNA-directed RNA polymerase 19 kDa subunit (OPG131) from Monkeypox virus.